A 366-amino-acid polypeptide reads, in one-letter code: Elongation factor Ts, mitochondrial (366 aa).

The N-terminal 50 residues, 1 to 50, are a transit peptide targeting the mitochondrion; it reads MAWSQSARKPMIGLLFRAQQHSARGYSYSAFQAHLSSSNVDQSATLLRRF.

It belongs to the EF-Ts family.

It localises to the mitochondrion. Associates with the EF-Tu.GDP complex and induces the exchange of GDP to GTP. It remains bound to the aminoacyl-tRNA.EF-Tu.GTP complex up to the GTP hydrolysis stage on the ribosome. This chain is Elongation factor Ts, mitochondrial, found in Oryza sativa subsp. japonica (Rice).